Consider the following 622-residue polypeptide: C6 finger transcription factor fumR (622 aa).

Positions 94-123 (CDRCHGQKLRCRRENNSDTCVRCARAGVRC) form a DNA-binding region, zn(2)-C6 fungal-type. 4 disordered regions span residues 127 to 175 (PMRL…HSDH), 206 to 248 (ALTA…APNL), 299 to 360 (FDQA…SNSI), and 556 to 585 (PATG…DAGD). Composition is skewed to polar residues over residues 148 to 167 (PANG…GPND), 217 to 226 (VHTSQPSGPQ), and 347 to 360 (RGNS…SNSI). The span at 556–571 (PATGSASKTAASGPPA) shows a compositional bias: low complexity.

It localises to the nucleus. In terms of biological role, transcription factor that regulates the expression of the gene clusters that mediate the biosynthesis of pseurotin and fumagillin. The polypeptide is C6 finger transcription factor fumR (Aspergillus fumigatus (strain ATCC MYA-4609 / CBS 101355 / FGSC A1100 / Af293) (Neosartorya fumigata)).